Here is a 162-residue protein sequence, read N- to C-terminus: Transcription antitermination protein RfaH (162 aa).

Belongs to the RfaH family. In terms of assembly, interacts with both the nontemplate DNA and the RNA polymerase (RNAP). Monomer in solution.

Functionally, enhances distal genes transcription elongation in a specialized subset of operons that encode extracytoplasmic components. RfaH is recruited into a multi-component RNA polymerase complex by the ops element, which is a short conserved DNA sequence located downstream of the main promoter of these operons. Once bound, RfaH suppresses pausing and inhibits Rho-dependent and intrinsic termination at a subset of sites. Termination signals are bypassed, which allows complete synthesis of long RNA chains. Enhances expression of several operons involved in synthesis of lipopolysaccharides, exopolysaccharides, hemolysin, and sex factor. Also negatively controls expression and surface presentation of AG43 and possibly another AG43-independent factor that mediates cell-cell interactions and biofilm formation. The chain is Transcription antitermination protein RfaH from Escherichia coli (strain K12).